Reading from the N-terminus, the 69-residue chain is MVPPVQVSPLIKLGRYSALVLGMAYGAKRYSYLKPRAEEERRVAAEEKKRLDELKRIERELAEGDTILK.

N6-acetyllysine is present on lysine 34.

Belongs to the ATPase e subunit family. Component of the ATP synthase complex composed at least of ATP5F1A/subunit alpha, ATP5F1B/subunit beta, ATP5MC1/subunit c (homooctomer), MT-ATP6/subunit a, MT-ATP8/subunit 8, ATP5ME/subunit e, ATP5MF/subunit f, ATP5MG/subunit g, ATP5MK/subunit k, ATP5MJ/subunit j, ATP5F1C/subunit gamma, ATP5F1D/subunit delta, ATP5F1E/subunit epsilon, ATP5PF/subunit F6, ATP5PB/subunit b, ATP5PD/subunit d, ATP5PO/subunit OSCP. ATP synthase complex consists of a soluble F(1) head domain (subunits alpha(3) and beta(3)) - the catalytic core - and a membrane F(0) domain - the membrane proton channel (subunits c, a, 8, e, f, g, k and j). These two domains are linked by a central stalk (subunits gamma, delta, and epsilon) rotating inside the F1 region and a stationary peripheral stalk (subunits F6, b, d, and OSCP).

The protein resides in the mitochondrion. It localises to the mitochondrion inner membrane. In terms of biological role, subunit e, of the mitochondrial membrane ATP synthase complex (F(1)F(0) ATP synthase or Complex V) that produces ATP from ADP in the presence of a proton gradient across the membrane which is generated by electron transport complexes of the respiratory chain. ATP synthase complex consist of a soluble F(1) head domain - the catalytic core - and a membrane F(1) domain - the membrane proton channel. These two domains are linked by a central stalk rotating inside the F(1) region and a stationary peripheral stalk. During catalysis, ATP synthesis in the catalytic domain of F(1) is coupled via a rotary mechanism of the central stalk subunits to proton translocation. In vivo, can only synthesize ATP although its ATP hydrolase activity can be activated artificially in vitro. Part of the complex F(0) domain. The chain is ATP synthase F(0) complex subunit e, mitochondrial from Cricetulus longicaudatus (Long-tailed dwarf hamster).